We begin with the raw amino-acid sequence, 130 residues long: Small ribosomal subunit protein uS8 (130 aa).

Belongs to the universal ribosomal protein uS8 family. As to quaternary structure, part of the 30S ribosomal subunit. Contacts proteins S5 and S12.

In terms of biological role, one of the primary rRNA binding proteins, it binds directly to 16S rRNA central domain where it helps coordinate assembly of the platform of the 30S subunit. In Ruegeria pomeroyi (strain ATCC 700808 / DSM 15171 / DSS-3) (Silicibacter pomeroyi), this protein is Small ribosomal subunit protein uS8.